Here is a 383-residue protein sequence, read N- to C-terminus: 23S rRNA (uracil(747)-C(5))-methyltransferase RlmC (383 aa).

4 residues coordinate [4Fe-4S] cluster: C3, C11, C14, and C89. S-adenosyl-L-methionine contacts are provided by Q214, F243, E270, and N315. The active-site Nucleophile is the C342.

Belongs to the class I-like SAM-binding methyltransferase superfamily. RNA M5U methyltransferase family. RlmC subfamily.

The catalysed reaction is uridine(747) in 23S rRNA + S-adenosyl-L-methionine = 5-methyluridine(747) in 23S rRNA + S-adenosyl-L-homocysteine + H(+). Its function is as follows. Catalyzes the formation of 5-methyl-uridine at position 747 (m5U747) in 23S rRNA. The sequence is that of 23S rRNA (uracil(747)-C(5))-methyltransferase RlmC from Actinobacillus succinogenes (strain ATCC 55618 / DSM 22257 / CCUG 43843 / 130Z).